The chain runs to 104 residues: Secretoglobin family 3A member 1 (104 aa).

The first 21 residues, 1-21 (MKLTTTFLVLCVALLSDSGVA), serve as a signal peptide directing secretion.

The protein belongs to the secretoglobin family. UGRP subfamily. Homodimer; disulfide-linked. In terms of tissue distribution, highly expressed in lung, where it localizes to epithelial cells lining the trachea and bronchi. Expression in lung is mainly restricted to bronchi, submucosal glands of the trachea, and tracheal epithelium, with little expression in terminal bronchioles. Expressed in uterus where it localizes to epithelial cells of the uterine glands. Also detected in heart, stomach and small intestine.

The protein resides in the secreted. In terms of biological role, secreted cytokine-like protein. Inhibits cell growth in vitro. The protein is Secretoglobin family 3A member 1 (Scgb3a1) of Mus musculus (Mouse).